Consider the following 1060-residue polypeptide: RNA-binding protein 27 (1060 aa).

Basic and acidic residues-rich tracts occupy residues 91–102 and 124–143; these read LVQEKEEIKEEV and TRSESSERRTREKKREDGKW. 2 disordered regions span residues 91-143 and 162-235; these read LVQE…DGKW and WRRG…GAQS. A compositionally biased stretch (basic residues) spans 165-185; sequence GRSKSRSKSRGLSRSRSRSRG. Residues 186–211 show a composition bias toward basic and acidic residues; that stretch reads RSKDRDPNRNVEHRERSKFKSERNDL. Positions 225-235 are enriched in polar residues; that stretch reads SSEQYSSGAQS. The segment at 273–301 adopts a C3H1-type zinc-finger fold; it reads LPPKRRCRDYDERGFCVLGDLCQFDHGND. Pro residues-rich tracts occupy residues 319–356 and 371–384; these read PPPGLPPPPPPGMLMPPMPGPGPGPGPGPGPGPGPGPG and QPPPSVVLPIPRPP. The tract at residues 319 to 412 is disordered; sequence PPPGLPPPPP…PNLASVGTRL (94 aa). Residues 386-402 show a composition bias toward polar residues; that stretch reads TQSSLINSRDQPGTSAV. Residue threonine 447 is modified to Phosphothreonine. Arginine 455 carries the omega-N-methylarginine modification. Positions 565 to 592 are disordered; sequence MSGLEGPLTKKPWLGKQGNNNQNKPGFL. The span at 579–588 shows a compositional bias: low complexity; that stretch reads GKQGNNNQNK. An RRM domain is found at 600 to 674; sequence TKLEVKKIPQ…RFIRVLWHRE (75 aa). A coiled-coil region spans residues 809–886; the sequence is VQEVLKKKQE…KDELKTSSAV (78 aa). Serine 927 is modified (phosphoserine). Disordered stretches follow at residues 940-968 and 1006-1060; these read PVGRGKTMSSQGRGRGRGRGGRGRGSLNH and DRRL…SWRR. Phosphoserine occurs at positions 1012 and 1020. A compositionally biased stretch (acidic residues) spans 1024 to 1053; that stretch reads ETEEEEVKEEETETSDLFLPDDDDEDEDEY.

The protein resides in the cytoplasm. Its subcellular location is the nucleus speckle. Its function is as follows. May be involved in the turnover of nuclear polyadenylated (pA+) RNA. The sequence is that of RNA-binding protein 27 from Homo sapiens (Human).